Consider the following 390-residue polypeptide: Neuromedin-B receptor (390 aa).

Topologically, residues 1 to 41 (MPPRSLSNLSFPTEANESELVPEVWEKDFLPDSDGTTAELV) are extracellular. Asparagine 8 and asparagine 16 each carry an N-linked (GlcNAc...) asparagine glycan. The chain crosses the membrane as a helical span at residues 42–65 (IRCVIPSLYLIIISVGLLGNIMLV). Residues 66–79 (KIFLTNSAMRNVPN) are Cytoplasmic-facing. Residues 80–99 (IFISNLAAGDLLLLLTCVPV) form a helical membrane-spanning segment. The Extracellular portion of the chain corresponds to 100–117 (DASRYFFDEWVFGKLGCK). Cysteine 116 and cysteine 198 are joined by a disulfide. The chain crosses the membrane as a helical span at residues 118 to 139 (LIPAIQLTSVGVSVFTLTALSA). The Cytoplasmic portion of the chain corresponds to 140–156 (DRYRAIVNPMDMQTSGV). Residues 157 to 177 (LLWTSLKAVGIWVVSVLLAVP) form a helical membrane-spanning segment. Over 178-211 (EAVFSEVARIGSLDNSSFTACIPYPQTDELHPKI) the chain is Extracellular. Asparagine 192 carries N-linked (GlcNAc...) asparagine glycosylation. Residues 212–235 (HSVLIFLVYFLIPLVIISIYYYHI) form a helical membrane-spanning segment. At 236–266 (AKTLIKSAHNLPGEYNEHTKKQMETRKRLAK) the chain is on the cytoplasmic side. A helical transmembrane segment spans residues 267-287 (IVLVFVGCFVFCWFPNHVLYL). Over 288 to 299 (YRSFNYKEIDPS) the chain is Extracellular. The chain crosses the membrane as a helical span at residues 300–327 (LGHMIVTLVARVLSFSNSCVNPFALYLL). At 328–390 (SESFRKHFNS…GHSTKQEIAL (63 aa)) the chain is on the cytoplasmic side. Cysteine 341 is lipidated: S-palmitoyl cysteine. Serine 352 is subject to Phosphoserine.

This sequence belongs to the G-protein coupled receptor 1 family. In terms of tissue distribution, expressed in a subset of neurons of the pre-Botzinger complex. Within the pre-Botzinger complex, there is some overlap with neurons expressing Grpr with some cells expressing only Grpr or Nmbr while some cells express both. Expressed in dorsal root ganglion neurons and mast cells. Expressed in lung.

The protein resides in the cell membrane. Receptor for neuromedin-B. Contributes to the maintenance of basal sigh rate through signaling in the pre-Botzinger complex, a cluster of several thousand neurons in the ventrolateral medulla responsible for inspiration during respiratory activity. Contributes to the induction of sneezing following exposure to chemical irritants or allergens which causes release of NMB by nasal sensory neurons and activation of NMBR-expressing neurons in the sneeze-evoking region of the brainstem. These in turn activate neurons of the caudal ventral respiratory group, giving rise to the sneezing response. Contributes to induction of acute itch, possibly through its activation on dorsal root ganglion neurons by the NMB peptide. Plays a role in the innate immune response to influenza A virus infection by enhancing interferon alpha expression and reducing expression of IL6. Plays a role in CSF1-induced proliferation of osteoclast precursors by contributing to the positive regulation of the expression of the CSF1 receptor CSF1R. In Mus musculus (Mouse), this protein is Neuromedin-B receptor (Nmbr).